The sequence spans 138 residues: Putative ribonuclease VapC45 (138 aa).

Its function is as follows. Toxic component of a type II toxin-antitoxin (TA) system. An RNase. The cognate antitoxin is VapB45. The protein is Putative ribonuclease VapC45 of Mycobacterium tuberculosis (strain ATCC 25618 / H37Rv).